The sequence spans 292 residues: MTQSAGLRFRQALANSKPLQIVGTTNAYFALMAEQTGFQALYLSGAGVANASYGLPDLGMTSMNDVLIDAGRITSATQLPLLVDIDTGWGGAFNIARTIKEFEKIGVAAVHMEDQVSQKRCGHRPNKAVVSTEEMVDRIKAAVDARTDPNFVIMARTDAVAVEGLEAGIERAKAYIAAGADMIFAEALTELDQYRHFKAQVKAPILANMTEFGQTQLFNKEELAQAGADMVLYPLGTFRAANQAALKVMQALMNDGHQRNVLDTMQTRADLYKYLGYHAFEDKLDQLFSQDK.

44–46 is a binding site for substrate; the sequence is SGA. Residues Asp84 and Asp86 each contribute to the Mg(2+) site. Substrate-binding positions include 121-122, Arg156, Glu186, 208-210, Arg239, and Arg268; these read CG and NMT.

Belongs to the isocitrate lyase/PEP mutase superfamily. Methylisocitrate lyase family. In terms of assembly, homotetramer; dimer of dimers. Mg(2+) serves as cofactor.

The catalysed reaction is (2S,3R)-3-hydroxybutane-1,2,3-tricarboxylate = pyruvate + succinate. The protein operates within organic acid metabolism; propanoate degradation. Its function is as follows. Involved in the catabolism of short chain fatty acids (SCFA) via the 2-methylcitrate cycle I (propionate degradation route). Catalyzes the thermodynamically favored C-C bond cleavage of (2R,3S)-2-methylisocitrate to yield pyruvate and succinate via an alpha-carboxy-carbanion intermediate. The polypeptide is 2-methylisocitrate lyase (Shewanella oneidensis (strain ATCC 700550 / JCM 31522 / CIP 106686 / LMG 19005 / NCIMB 14063 / MR-1)).